Here is a 230-residue protein sequence, read N- to C-terminus: Thiamine-triphosphatase (230 aa).

At Ala-2 the chain carries N-acetylalanine. Positions 5–201 (LIEVERKFLP…AKLIVYLQRF (197 aa)) constitute a CYTH domain. 2 residues coordinate Mg(2+): Glu-7 and Glu-9. 5 residues coordinate substrate: Lys-11, Arg-55, Arg-57, Lys-65, and Arg-125. Residues Asp-145, Glu-157, and Glu-159 each coordinate Mg(2+). Glu-157 lines the substrate pocket. Lys-193 is a binding site for substrate.

It belongs to the ThTPase family. In terms of assembly, monomer. Mg(2+) serves as cofactor.

The protein localises to the cytoplasm. It catalyses the reaction thiamine triphosphate + H2O = thiamine diphosphate + phosphate + H(+). In terms of biological role, hydrolase highly specific for thiamine triphosphate (ThTP). The chain is Thiamine-triphosphatase (THTPA) from Macaca fascicularis (Crab-eating macaque).